The sequence spans 517 residues: MDLSSRLSSGSSRIPKRHRDYRDEEPRRERGSGGIGREDPRGHYGSERPRRRRRDESDFRRHRESRERSYREDERPRRERRYDDYEPRSLRYSSVGRSRSPPPSRERSVRSIEQELEQLRDVTPINQWKRKRSLWDIKPPGYELVTADQAKMSGVFPLPGAPRAAVTDPEKLLEFARSAEGSIIAPPPPLQPGASRQARRLVVTGIPNEFVEDAFVSFIEDLFISTTYHKPETKHFSSVNVCKEENFAILEVATPEDATFLWGLQSESYSNDVFLKFQRIQNYIVPQITPEVSQKRSDDYAKNDVLDSKDKIYISNLPLNLGEDQVVELLKPFGDLLSFQLIKNIADGSSKGFCFCEFKNPSDAEVAISGLDGKDTYGNKLHAQFACVGLNQAMIDKSNGMAILTELAKASSQSIPTRVLQLHNLITGDEIMDVQEYEDIYESVKTQFSNYGPLIDIKIPRSIGTRNSGLGTGKVFVRYSDIRSAEVAMEEMKGCKFNDRTIVIAFYGEDCYKANAW.

Over residues 1–13 the composition is skewed to low complexity; that stretch reads MDLSSRLSSGSSR. The tract at residues 1–112 is disordered; sequence MDLSSRLSSG…PSRERSVRSI (112 aa). Basic and acidic residues predominate over residues 20–89; the sequence is DYRDEEPRRE…RRYDDYEPRS (70 aa). RRM domains follow at residues 310–388 and 418–509; these read DKIY…FACV and RVLQ…FYGE.

The protein belongs to the splicing factor SR family. In terms of assembly, forms a heterodimer with the U2AF small subunit. Can also form a homodimer. U2AF large subunit (U2AF59), U2AF small subunit (U2AF23) and SF1 (bpb1) interact to form a complex required for complex A formation. Interacts with wat1/pop3.

It is found in the nucleus. Its function is as follows. Necessary for the splicing of pre-mRNA. The SF1-U2AF59-U2AF23 complex has a role in the recognition of the branch site (5'-UACUAAC-3'), the pyrimidine tract and the 3'-splice site at the 3'-end of introns. The chain is Splicing factor U2AF 59 kDa subunit (prp2) from Schizosaccharomyces pombe (strain 972 / ATCC 24843) (Fission yeast).